Consider the following 31-residue polypeptide: Chymotrypsin (31 aa).

One can recognise a Peptidase S1 domain in the interval 1–31; the sequence is IVGGVEAVPGVWPYQAALFIIDMYFCGGSLI.

This sequence belongs to the peptidase S1 family.

It localises to the secreted. The protein resides in the extracellular space. The catalysed reaction is Preferential cleavage: Tyr-|-Xaa, Trp-|-Xaa, Phe-|-Xaa, Leu-|-Xaa.. The protein is Chymotrypsin of Penaeus monodon (Giant tiger prawn).